Reading from the N-terminus, the 635-residue chain is Threonine--tRNA ligase (635 aa).

One can recognise a TGS domain in the interval 1–61 (MIAITLPDGS…EQNVDLAIVT (61 aa)). The interval 242–533 (DHRKLGKLLD…LLENHAGALP (292 aa)) is catalytic. Zn(2+) is bound by residues C333, H384, and H510.

Belongs to the class-II aminoacyl-tRNA synthetase family. As to quaternary structure, homodimer. The cofactor is Zn(2+).

Its subcellular location is the cytoplasm. The catalysed reaction is tRNA(Thr) + L-threonine + ATP = L-threonyl-tRNA(Thr) + AMP + diphosphate + H(+). Functionally, catalyzes the attachment of threonine to tRNA(Thr) in a two-step reaction: L-threonine is first activated by ATP to form Thr-AMP and then transferred to the acceptor end of tRNA(Thr). Also edits incorrectly charged L-seryl-tRNA(Thr). In Ralstonia nicotianae (strain ATCC BAA-1114 / GMI1000) (Ralstonia solanacearum), this protein is Threonine--tRNA ligase.